The primary structure comprises 782 residues: Chaoptin (782 aa).

22 LRR repeats span residues 16 to 37 (SLLT…PSDA), 43 to 64 (RLEE…SFHF), 67 to 88 (SLKK…TFQG), 93 to 114 (DLTE…TFAD), 117 to 138 (QLEQ…AFMN), 141 to 162 (SLKR…TFQN), 165 to 186 (ELED…IFDQ), 191 to 212 (GMFH…PSVP), 224 to 245 (NIKV…FFRP), 249 to 270 (SLMQ…LFGN), 273 to 294 (HLQV…TFRN), 297 to 318 (KLQW…LFRF), 321 to 342 (NLRI…LFRE), 344 to 364 (GLER…TSLS), 370 to 391 (TLSE…GQLA), 395 to 416 (CLSW…TFKG), 419 to 442 (RLAS…SFQG), 446 to 467 (TLLH…STPN), 468 to 488 (LLSL…VAGN), 491 to 512 (SLRY…THSL), 514 to 535 (ELRH…SLLG), and 539 to 560 (QLEE…AFCK). N-linked (GlcNAc...) asparagine glycans are attached at residues Asn196, Asn234, and Asn262. Asn454 and Asn488 each carry an N-linked (GlcNAc...) asparagine glycan. Asn530 carries N-linked (GlcNAc...) asparagine glycosylation. N-linked (GlcNAc...) asparagine glycans are attached at residues Asn618, Asn648, and Asn667.

The protein belongs to the chaoptin family.

The protein localises to the cell membrane. Required for photoreceptor cell morphogenesis. Mediates homophilic cellular adhesion. This chain is Chaoptin (CHP), found in Tribolium castaneum (Red flour beetle).